Reading from the N-terminus, the 2533-residue chain is Highly reducing polyketide synthase azaB (2533 aa).

One can recognise a Ketosynthase family 3 (KS3) domain in the interval 7-433 (TAPMAIIGMA…GSNAHAILES (427 aa)). Residues cysteine 180, histidine 315, and histidine 355 each act as for beta-ketoacyl synthase activity in the active site. The segment at 554-821 (WVFTGQGAQW…VEFESSFRHM (268 aa)) is malonyl-CoA:ACP transacylase (MAT) domain. The tract at residues 946–1081 (SDLVGYSQPS…GRISVITTSD (136 aa)) is N-terminal hotdog fold. The PKS/mFAS DH domain occupies 946-1254 (SDLVGYSQPS…CQSLGRALDR (309 aa)). The segment at 947-1251 (DLVGYSQPSI…GLTCQSLGRA (305 aa)) is dehydratase (DH) domain. Histidine 978 functions as the Proton acceptor; for dehydratase activity in the catalytic mechanism. The segment at 1097 to 1254 (YNRRIDPRYM…CQSLGRALDR (158 aa)) is C-terminal hotdog fold. Aspartate 1163 serves as the catalytic Proton donor; for dehydratase activity. The segment at 1419–1554 (TRQVSELVRL…GGKLILMETT (136 aa)) is methyltransferase (CMet) domain. Residues 1839-2155 (GLIDTLVFHD…TGQHMGKIII (317 aa)) form an enoyl reductase (ER) domain region. A ketoreductase (KR) domain region spans residues 2178-2349 (ASYVIVGGLG…AVSLDLGIVR (172 aa)). The Carrier domain maps to 2455–2532 (DAAALICQEL…DLSLRVATKR (78 aa)). An O-(pantetheine 4'-phosphoryl)serine modification is found at serine 2492.

It participates in secondary metabolite biosynthesis. In terms of biological role, highly reducing polyketide synthase; part of the gene cluster that mediates the biosynthesis of azaphilones, a class of fungal metabolites characterized by a highly oxygenated pyrano-quinone bicyclic core and exhibiting a broad range of bioactivities. In the first step, the non-reducing polyketide synthase azaA forms the hexaketide precursor from successive condensations of five malonyl-CoA units, presumably with a simple acetyl-CoA starter unit. The reactive polyketide chain then undergoes a PT-mediated C2-C7 cyclization to afford the aromatic ring and is eventually released as an aldehyde through the R-domain. The putative ketoreductase azaE is proposed to catalyze the reduction of the terminal ketone resulting in the early culture product FK17-P2a. The monooxygenase azaH was demonstrated to be the only enzyme required to convert FK17-P2a to azanigerone E. AzaH first hydroxylates the benzaldehyde intermediate FK17-P2a at C4, which triggers the formation of the pyran-ring to afford azanigerone E. In parallel, the 2,4-dimethylhexanoyl chain is synthesized by the HR-PKS azaB and is proposed to be transferred to the C4-hydroxyl of azanigerone E by the acyltransferase azaD directly from the ACP domain of azaB. Alternatively, the 2,4-dimethyl-hexanoyl chain may be offloaded from the HR-PKS as a carboxylic acid and converted to an acyl-CoA by azaF. The resulting acyl-CoA molecule could then be taken up as a substrate by AzaD to form azanigerone B. To yield the carboxylic acid substituent in azanigerone A, the hydroxypropyl side chain of azanigerone B would need to undergo a C-C oxidative cleavage catalyzed by cytochrome P450 AzaI. AzaI is proposed to act on a vicinal diol that leads to a C-C bond scission either through an alkoxyradical intermediate or a peroxy complex. In the biosynthesis of azanigerone A, azanigerone B first undergoes hydroxylation at C10, possibly catalyzed by one of the two FAD-dependent monooxygenases encoded in the cluster, azaG or azaL, resulting in the vicinal diol azanigerone C. Oxidative cleavage of azanigerone C by azaI would yield the corresponding aldehyde derivative of azanigerone A. Finally, the dehydrogenase azaJ is proposed to convert the aldehyde functional group into the carboxylic acid, completing the conversion from azanigerone B to azanigerone A. Alternatively, the oxidation of aldehyde to carboxylic acid may be catalyzed by the same P450 enzyme azaI via consecutive oxidation or by endogenous alcohol dehydrogenase. This Aspergillus niger (strain ATCC 1015 / CBS 113.46 / FGSC A1144 / LSHB Ac4 / NCTC 3858a / NRRL 328 / USDA 3528.7) protein is Highly reducing polyketide synthase azaB.